The chain runs to 922 residues: GPI inositol-deacylase (922 aa).

Topologically, residues 1-11 (MFLHSVNLWNL) are cytoplasmic. A helical transmembrane segment spans residues 12-32 (AFYVFMVFLATLGLWDVFFGF). At 33 to 597 (EENKCSMSYM…GQVVRFHGGA (565 aa)) the chain is on the lumenal side. S174 is an active-site residue. 3 N-linked (GlcNAc...) asparagine glycosylation sites follow: N363, N402, and N558. A helical membrane pass occupies residues 598–618 (LPAYVVSSILLAYGGQLYSLL). The Cytoplasmic portion of the chain corresponds to 619 to 641 (STGFCLEYGTMLDKEAKPYKVDP). A helical membrane pass occupies residues 642 to 662 (FVIMIKFLLGYKWFKELWDAV). Residues 663-668 (LLPELD) are Lumenal-facing. Residues 669 to 689 (AIVLTSQSMCFPLVSLILFLF) traverse the membrane as a helical segment. Over 690-694 (GTCTA) the chain is Cytoplasmic. A helical membrane pass occupies residues 695-715 (YWSGLLSSASVQLLSSLWLAL). Over 716 to 733 (KRPAELPKDVKVMSPDLP) the chain is Lumenal. Residues 734–754 (VLTVVFLIISWTTCGALAILL) traverse the membrane as a helical segment. Over 755–816 (SYLYYVFKVV…NDAEDSLRMH (62 aa)) the chain is Cytoplasmic. Residues 776–801 (NQPVNPKHSRRSEKKSNHHKDSAIQN) are disordered. The span at 782–793 (KHSRRSEKKSNH) shows a compositional bias: basic residues. A helical transmembrane segment spans residues 817–837 (STVINLLTWVVLLSMPSLIYW). At 838 to 853 (SKNLRYYFKLNPDPCK) the chain is on the lumenal side. The chain crosses the membrane as a helical span at residues 854 to 874 (PLAFLLIPAIAVLGNTHTVSI). The Cytoplasmic portion of the chain corresponds to 875–894 (KSSKLLKTASQFPLPLAVGV). Residues 895–915 (IAFGSSHLYRVPCFVIIPLVF) form a helical membrane-spanning segment. Topologically, residues 916–922 (HSLCNFM) are lumenal.

It belongs to the GPI inositol-deacylase family.

Its subcellular location is the endoplasmic reticulum membrane. GPI inositol-deacylase that catalyzes the remove of the acyl chain linked to the 2-OH position of inositol ring from the GPI-anchored protein (GPI-AP) in the endoplasmic reticulum. Initiates the post-attachment remodeling phase of GPI-AP biogenesis and participates in endoplasmic reticulum (ER)-to-Golgi transport of GPI-anchored protein. This chain is GPI inositol-deacylase, found in Rattus norvegicus (Rat).